Here is a 239-residue protein sequence, read N- to C-terminus: MDERSLTFHIGPVWFDGTVCMMVLLTCLIVFFLVYFFTRNLKMKPTGKQNALEWVIDFTRGIVTDNLPRKELNNFHLLAFTLFLFVFVANNIGLITKIVLPSETTLWKSPTADPFVTLTLAFIMITLTHLFGVKKLGFKGYFVNSFLKPYSFMFPMKLIEEFTNLLTLALRLYGNIYAGEVLLTLIANMMNNLGWFSLPLAIPLEMVWIAFSLFIGSIQAFVFVTLSMVYMSHKIEVEE.

Helical transmembrane passes span 17-37 (GTVC…VYFF), 75-95 (FHLL…IGLI), 113-133 (DPFV…LFGV), 182-202 (LLTL…PLAI), and 206-226 (MVWI…FVTL).

Belongs to the ATPase A chain family. As to quaternary structure, F-type ATPases have 2 components, CF(1) - the catalytic core - and CF(0) - the membrane proton channel. CF(1) has five subunits: alpha(3), beta(3), gamma(1), delta(1), epsilon(1). CF(0) has three main subunits: a(1), b(2) and c(9-12). The alpha and beta chains form an alternating ring which encloses part of the gamma chain. CF(1) is attached to CF(0) by a central stalk formed by the gamma and epsilon chains, while a peripheral stalk is formed by the delta and b chains.

It is found in the cell membrane. In terms of biological role, key component of the proton channel; it plays a direct role in the translocation of protons across the membrane. This Enterococcus hirae (strain ATCC 9790 / DSM 20160 / JCM 8729 / LMG 6399 / NBRC 3181 / NCIMB 6459 / NCDO 1258 / NCTC 12367 / WDCM 00089 / R) protein is ATP synthase subunit a.